The chain runs to 240 residues: Ribonuclease PH (240 aa).

Residues Arg-87 and 125–127 each bind phosphate; that span reads GTR.

The protein belongs to the RNase PH family. In terms of assembly, homohexameric ring arranged as a trimer of dimers.

The catalysed reaction is tRNA(n+1) + phosphate = tRNA(n) + a ribonucleoside 5'-diphosphate. Functionally, phosphorolytic 3'-5' exoribonuclease that plays an important role in tRNA 3'-end maturation. Removes nucleotide residues following the 3'-CCA terminus of tRNAs; can also add nucleotides to the ends of RNA molecules by using nucleoside diphosphates as substrates, but this may not be physiologically important. Probably plays a role in initiation of 16S rRNA degradation (leading to ribosome degradation) during starvation. This chain is Ribonuclease PH, found in Pseudomonas syringae pv. syringae (strain B728a).